Here is a 37-residue protein sequence, read N- to C-terminus: Large ribosomal subunit protein bL36 (37 aa).

Belongs to the bacterial ribosomal protein bL36 family.

This chain is Large ribosomal subunit protein bL36, found in Desulfitobacterium hafniense (strain Y51).